The sequence spans 508 residues: Protein FAM227B (508 aa).

Disordered regions lie at residues 1 to 22 and 485 to 508; these read MAGQ…MQEP and ASLS…EEEY. Positions 486 to 497 are enriched in low complexity; sequence SLSSSSSSSPSS.

It belongs to the FAM227 family.

This chain is Protein FAM227B (FAM227B), found in Homo sapiens (Human).